The chain runs to 302 residues: Nuclear egress protein 1 (302 aa).

The segment covering 1–17 (MPKSVSSHISLATSTGR) has biased composition (polar residues). Positions 1–22 (MPKSVSSHISLATSTGRSGPRD) are disordered. The CCCH-type zinc finger occupies 102 to 227 (CVSLSPFGHS…CILFKTRALH (126 aa)).

Belongs to the herpesviridae NEC1 protein family. As to quaternary structure, forms a heterohexameric complex with NEC2. Interacts with capsid vertex specific component 2/CVC2; this interaction directs the capsid to the host inner nuclear membrane to initiate budding. In terms of processing, phosphorylated at serine residues in the N-terminus. This phosphorylation regulates the localization within the inner nuclear membrane.

The protein resides in the host nucleus inner membrane. In terms of biological role, plays an essential role in virion nuclear egress, the first step of virion release from infected cell. Within the host nucleus, NEC1 interacts with the newly formed capsid through the vertexes and directs it to the inner nuclear membrane by associating with NEC2. Induces the budding of the capsid at the inner nuclear membrane as well as its envelopment into the perinuclear space. There, the NEC1/NEC2 complex promotes the fusion of the enveloped capsid with the outer nuclear membrane and the subsequent release of the viral capsid into the cytoplasm where it will reach the secondary budding sites in the host Golgi or trans-Golgi network. In Homo sapiens (Human), this protein is Nuclear egress protein 1.